The following is a 208-amino-acid chain: Large ribosomal subunit protein eL13 (208 aa).

The protein belongs to the eukaryotic ribosomal protein eL13 family.

The sequence is that of Large ribosomal subunit protein eL13 (RPL13) from Chlamydomonas sp. (strain W80).